The following is a 178-amino-acid chain: CD209 antigen-like protein C (178 aa).

Cys-48 and Cys-59 are oxidised to a cystine. The region spanning 54–169 (VFQGNCYFFS…CTIKKYWICK (116 aa)) is the C-type lectin domain. Asn-70 carries N-linked (GlcNAc...) asparagine glycosylation. Intrachain disulfides connect Cys-76–Cys-168 and Cys-147–Cys-160. 5 residues coordinate Ca(2+): Glu-138, Asn-140, Glu-145, Asn-156, and Asp-157.

In terms of biological role, probable pathogen-recognition receptor. May recognize in a calcium-dependent manner high mannose N-linked oligosaccharides in a variety of pathogen antigens. The polypeptide is CD209 antigen-like protein C (Cd209c) (Mus musculus (Mouse)).